A 620-amino-acid polypeptide reads, in one-letter code: Dopamine beta-hydroxylase (620 aa).

At 1-19 the chain is on the cytoplasmic side; it reads MQPHLSHQPCWSLPSPSVR. The helical; Signal-anchor for type II membrane protein transmembrane segment at 20–40 threads the bilayer; that stretch reads EAASMYGTAVAIFLVILVAAL. Residues 41 to 620 are Intragranular-facing; the sequence is QGSEPPESPF…FVVITHGGRH (580 aa). The 117-residue stretch at 60–176 folds into the DOMON domain; the sequence is GTLELSWNVS…DTVHLVYGIL (117 aa). Residues asparagine 67 and asparagine 187 are each glycosylated (N-linked (GlcNAc...) asparagine). Disulfide bonds link cysteine 157–cysteine 599, cysteine 235–cysteine 286, cysteine 272–cysteine 298, cysteine 393–cysteine 506, cysteine 397–cysteine 568, and cysteine 469–cysteine 491. Tyrosine 233 is an active-site residue. Residues histidine 265 and histidine 266 each contribute to the Cu(2+) site. An N-linked (GlcNAc...) asparagine glycan is attached at asparagine 274. Position 336 (histidine 336) interacts with Cu(2+). Serine 349 carries the post-translational modification Phosphoserine; by CaMK. The active site involves histidine 415. Residues histidine 415 and histidine 417 each coordinate Cu(2+). N-linked (GlcNAc...) asparagine glycosylation is present at asparagine 475. Position 490 (methionine 490) interacts with Cu(2+). N-linked (GlcNAc...) asparagine glycans are attached at residues asparagine 569 and asparagine 587.

The protein belongs to the copper type II ascorbate-dependent monooxygenase family. Homotetramer; composed of two disulfide-linked dimers. The cofactor is Cu(2+). In terms of processing, proteolytic cleavage after the membrane-anchor leads to the release of the soluble form. N-glycosylated. As to expression, chromaffin granules of the adrenal medulla and synaptic vesicles of the sympathetic nervous system.

Its subcellular location is the cytoplasmic vesicle. The protein resides in the secretory vesicle lumen. The protein localises to the secretory vesicle. It localises to the chromaffin granule lumen. It is found in the secreted. Its subcellular location is the secretory vesicle membrane. The protein resides in the chromaffin granule membrane. It catalyses the reaction dopamine + 2 L-ascorbate + O2 = (R)-noradrenaline + 2 monodehydro-L-ascorbate radical + H2O. The protein operates within catecholamine biosynthesis; (R)-noradrenaline biosynthesis; (R)-noradrenaline from dopamine: step 1/1. Functionally, catalyzes the hydroxylation of dopamine to noradrenaline (also known as norepinephrine), and is thus vital for regulation of these neurotransmitters. This is Dopamine beta-hydroxylase (Dbh) from Rattus norvegicus (Rat).